The primary structure comprises 280 residues: Dihydropteroate synthase (280 aa).

The 265-residue stretch at 1–265 folds into the Pterin-binding domain; it reads MSPAPVQVMG…DVRASVDAIK (265 aa). Asparagine 13 provides a ligand contact to Mg(2+). Residues aspartate 86, asparagine 105, aspartate 177, lysine 213, and 253 to 255 each bind (7,8-dihydropterin-6-yl)methyl diphosphate; that span reads RVH.

The protein belongs to the DHPS family. Homodimer. Requires Mg(2+) as cofactor.

It carries out the reaction (7,8-dihydropterin-6-yl)methyl diphosphate + 4-aminobenzoate = 7,8-dihydropteroate + diphosphate. It functions in the pathway cofactor biosynthesis; tetrahydrofolate biosynthesis; 7,8-dihydrofolate from 2-amino-4-hydroxy-6-hydroxymethyl-7,8-dihydropteridine diphosphate and 4-aminobenzoate: step 1/2. In terms of biological role, catalyzes the condensation of para-aminobenzoate (pABA) with 6-hydroxymethyl-7,8-dihydropterin diphosphate (DHPt-PP) to form 7,8-dihydropteroate (H2Pte), the immediate precursor of folate derivatives. This chain is Dihydropteroate synthase (folP1), found in Mycobacterium bovis (strain ATCC BAA-935 / AF2122/97).